Consider the following 775-residue polypeptide: Venom dipeptidyl peptidase 4 (775 aa).

The N-terminal stretch at 1-23 is a signal peptide; that stretch reads MEVLVQLALLLVVHGSLVVLVAG. Asn68 and Asn239 each carry an N-linked (GlcNAc...) asparagine glycan. 2 disulfides stabilise this stretch: Cys450–Cys453 and Cys463–Cys481. N-linked (GlcNAc...) asparagine glycosylation is found at Asn473, Asn505, Asn578, and Asn631. Ser639 functions as the Charge relay system in the catalytic mechanism. Residues Cys659 and Cys770 are joined by a disulfide bond. N-linked (GlcNAc...) asparagine glycans are attached at residues Asn689 and Asn694. Residues Asp718 and His750 each act as charge relay system in the active site.

It belongs to the peptidase S9B family. DPPIV subfamily. Expressed by the venom duct.

The protein localises to the secreted. The catalysed reaction is Release of an N-terminal dipeptide, Xaa-Yaa-|-Zaa-, from a polypeptide, preferentially when Yaa is Pro, provided Zaa is neither Pro nor hydroxyproline.. Its activity is regulated as follows. Inhibited by diprotin A. Functionally, venom dipeptidyl-peptidase which removes N-terminal dipeptides sequentially from polypeptides having unsubstituted N-termini provided that the penultimate residue is proline. May process promelittin into its active form and/or modulate the chemotactic activity of immune cells after the insect sting. In Apis mellifera (Honeybee), this protein is Venom dipeptidyl peptidase 4.